Here is a 414-residue protein sequence, read N- to C-terminus: Serine hydroxymethyltransferase (414 aa).

(6S)-5,6,7,8-tetrahydrofolate is bound by residues Leu121 and 125-127; that span reads GHL. An N6-(pyridoxal phosphate)lysine modification is found at Lys229.

Belongs to the SHMT family. In terms of assembly, homodimer. Requires pyridoxal 5'-phosphate as cofactor.

It is found in the cytoplasm. It catalyses the reaction (6R)-5,10-methylene-5,6,7,8-tetrahydrofolate + glycine + H2O = (6S)-5,6,7,8-tetrahydrofolate + L-serine. It functions in the pathway one-carbon metabolism; tetrahydrofolate interconversion. It participates in amino-acid biosynthesis; glycine biosynthesis; glycine from L-serine: step 1/1. Catalyzes the reversible interconversion of serine and glycine with tetrahydrofolate (THF) serving as the one-carbon carrier. This reaction serves as the major source of one-carbon groups required for the biosynthesis of purines, thymidylate, methionine, and other important biomolecules. Also exhibits THF-independent aldolase activity toward beta-hydroxyamino acids, producing glycine and aldehydes, via a retro-aldol mechanism. This Paracidovorax citrulli (strain AAC00-1) (Acidovorax citrulli) protein is Serine hydroxymethyltransferase.